A 1207-amino-acid polypeptide reads, in one-letter code: DNA-directed RNA polymerase subunit beta' (1207 aa).

The Zn(2+) site is built by Cys60, Cys62, Cys75, and Cys78. Mg(2+)-binding residues include Asp449, Asp451, and Asp453. Zn(2+)-binding residues include Cys822, Cys896, Cys903, and Cys906.

The protein belongs to the RNA polymerase beta' chain family. The RNAP catalytic core consists of 2 alpha, 1 beta, 1 beta' and 1 omega subunit. When a sigma factor is associated with the core the holoenzyme is formed, which can initiate transcription. Mg(2+) is required as a cofactor. Requires Zn(2+) as cofactor.

The enzyme catalyses RNA(n) + a ribonucleoside 5'-triphosphate = RNA(n+1) + diphosphate. Its function is as follows. DNA-dependent RNA polymerase catalyzes the transcription of DNA into RNA using the four ribonucleoside triphosphates as substrates. The chain is DNA-directed RNA polymerase subunit beta' from Staphylococcus aureus (strain USA300).